The sequence spans 122 residues: Large ribosomal subunit protein uL14 (122 aa).

Belongs to the universal ribosomal protein uL14 family. As to quaternary structure, part of the 50S ribosomal subunit. Forms a cluster with proteins L3 and L19. In the 70S ribosome, L14 and L19 interact and together make contacts with the 16S rRNA in bridges B5 and B8.

Binds to 23S rRNA. Forms part of two intersubunit bridges in the 70S ribosome. This is Large ribosomal subunit protein uL14 from Chromobacterium violaceum (strain ATCC 12472 / DSM 30191 / JCM 1249 / CCUG 213 / NBRC 12614 / NCIMB 9131 / NCTC 9757 / MK).